The sequence spans 216 residues: Cytidylate kinase (216 aa).

7-15 contributes to the ATP binding site; the sequence is GPSGTGKST.

The protein belongs to the cytidylate kinase family. Type 1 subfamily.

The protein localises to the cytoplasm. The catalysed reaction is CMP + ATP = CDP + ADP. It catalyses the reaction dCMP + ATP = dCDP + ADP. The protein is Cytidylate kinase of Chlamydia caviae (strain ATCC VR-813 / DSM 19441 / 03DC25 / GPIC) (Chlamydophila caviae).